Consider the following 213-residue polypeptide: High frequency lysogenization protein HflD (213 aa).

Residues 79-126 (QGLNAELTRYTLSLMVLERKLSSAKGALDTLGNRINGLQRQLEHFDLQ) are a coiled coil.

This sequence belongs to the HflD family. Interacts with CII protein from phage lambda.

The protein resides in the cytoplasm. It is found in the cell inner membrane. Functionally, negative regulator of phage lambda lysogenization. Contributes to the degradation of the phage regulatory protein CII. Acts probably by holding CII on the membrane surface, away from the target promoters, but close to the FtsH protease. The chain is High frequency lysogenization protein HflD from Escherichia coli O127:H6 (strain E2348/69 / EPEC).